The primary structure comprises 1561 residues: Sterile alpha motif domain-containing protein 9-like (1561 aa).

The 66-residue stretch at 14 to 79 (WTKEHVRKWV…RMYNKLISSP (66 aa)) folds into the SAM domain. The tract at residues 78–157 (SPESHNQDSR…DNKPKPEQMS (80 aa)) is disordered. 2 stretches are compositionally biased toward basic and acidic residues: residues 82–107 (HNQD…KNEE) and 142–153 (VTKDMEDNKPKP).

As to quaternary structure, interacts with EEA1.

It localises to the early endosome. The protein localises to the mitochondrion. Functionally, may be involved in endosome fusion. Mediates down-regulation of growth factor signaling via internalization of growth factor receptors. This Mus musculus (Mouse) protein is Sterile alpha motif domain-containing protein 9-like (Samd9l).